We begin with the raw amino-acid sequence, 239 residues long: Lactate utilization protein A (239 aa).

This sequence belongs to the LutA/YkgE family.

Its function is as follows. Is involved in L-lactate degradation and allows cells to grow with lactate as the sole carbon source. In Geobacillus kaustophilus (strain HTA426), this protein is Lactate utilization protein A.